A 594-amino-acid polypeptide reads, in one-letter code: Arginine--tRNA ligase (594 aa).

Residues 139 to 149 (ANPTGPLHVGH) carry the 'HIGH' region motif.

The protein belongs to the class-I aminoacyl-tRNA synthetase family. Monomer.

The protein resides in the cytoplasm. It catalyses the reaction tRNA(Arg) + L-arginine + ATP = L-arginyl-tRNA(Arg) + AMP + diphosphate. This is Arginine--tRNA ligase from Paraburkholderia phymatum (strain DSM 17167 / CIP 108236 / LMG 21445 / STM815) (Burkholderia phymatum).